A 305-amino-acid chain; its full sequence is Oxygen-dependent coproporphyrinogen-III oxidase (305 aa).

Residue Ser93 participates in substrate binding. Positions 97 and 107 each coordinate a divalent metal cation. His107 functions as the Proton donor in the catalytic mechanism. 109–111 provides a ligand contact to substrate; it reads NVR. 2 residues coordinate a divalent metal cation: His146 and His176. The tract at residues 241–276 is important for dimerization; that stretch reads YVEFNLVFDRGTLFGLQSGGRTESILMSLPPQVRWG. A substrate-binding site is contributed by 259 to 261; the sequence is GGR.

The protein belongs to the aerobic coproporphyrinogen-III oxidase family. In terms of assembly, homodimer. A divalent metal cation is required as a cofactor.

It is found in the cytoplasm. It carries out the reaction coproporphyrinogen III + O2 + 2 H(+) = protoporphyrinogen IX + 2 CO2 + 2 H2O. It participates in porphyrin-containing compound metabolism; protoporphyrin-IX biosynthesis; protoporphyrinogen-IX from coproporphyrinogen-III (O2 route): step 1/1. Functionally, involved in the heme biosynthesis. Catalyzes the aerobic oxidative decarboxylation of propionate groups of rings A and B of coproporphyrinogen-III to yield the vinyl groups in protoporphyrinogen-IX. The polypeptide is Oxygen-dependent coproporphyrinogen-III oxidase (Pseudomonas aeruginosa (strain UCBPP-PA14)).